The primary structure comprises 448 residues: Trigger factor (448 aa).

One can recognise a PPIase FKBP-type domain in the interval 167–253 (GSIVRVDFVE…VKDIKRRDIP (87 aa)).

Belongs to the FKBP-type PPIase family. Tig subfamily.

The protein resides in the cytoplasm. It carries out the reaction [protein]-peptidylproline (omega=180) = [protein]-peptidylproline (omega=0). In terms of biological role, involved in protein export. Acts as a chaperone by maintaining the newly synthesized protein in an open conformation. Functions as a peptidyl-prolyl cis-trans isomerase. The polypeptide is Trigger factor (Borrelia recurrentis (strain A1)).